The following is a 692-amino-acid chain: Putative receptor-like protein kinase At1g80870 (692 aa).

The helical transmembrane segment at 20–40 (LFLILTISSSLVIFFAILYFI) threads the bilayer. The 593-residue stretch at 81 to 673 (FDESNVIGKG…GEMDISSTAF (593 aa)) folds into the Protein kinase domain. ATP-binding positions include 87–95 (IGKGGSGTV) and K109. D206 functions as the Proton acceptor in the catalytic mechanism. 2 disordered regions span residues 427-446 (EISE…HRNM) and 511-533 (RRKS…GSEM). Basic residues-rich tracts occupy residues 432–444 (KNKR…KKHR) and 511–524 (RRKS…KKKN).

Belongs to the protein kinase superfamily. Ser/Thr protein kinase family.

It localises to the cell membrane. The enzyme catalyses L-seryl-[protein] + ATP = O-phospho-L-seryl-[protein] + ADP + H(+). It carries out the reaction L-threonyl-[protein] + ATP = O-phospho-L-threonyl-[protein] + ADP + H(+). This Arabidopsis thaliana (Mouse-ear cress) protein is Putative receptor-like protein kinase At1g80870.